The following is a 315-amino-acid chain: Ankyrin repeat domain-containing protein 54 (315 aa).

The tract at residues 1–49 (MDGSSPLLAAAGSDGDRSSSEGEYTLAGGPSAGDTEKREGESPMEAAGA) is disordered. 4 ANK repeats span residues 124-153 (HAVK…DPCA), 157-186 (KGRT…DPNQ), 190-219 (LGNT…RVDA), and 223-255 (AGRT…EVTQ).

The protein resides in the nucleus. It is found in the cytoplasm. It localises to the midbody. In terms of biological role, plays an important role in regulating intracellular signaling events associated with erythroid terminal differentiation. In Danio rerio (Zebrafish), this protein is Ankyrin repeat domain-containing protein 54 (ankrd54).